A 484-amino-acid chain; its full sequence is Glycogen synthase (484 aa).

ADP-alpha-D-glucose is bound at residue Lys21.

It belongs to the glycosyltransferase 1 family. Bacterial/plant glycogen synthase subfamily.

It catalyses the reaction [(1-&gt;4)-alpha-D-glucosyl](n) + ADP-alpha-D-glucose = [(1-&gt;4)-alpha-D-glucosyl](n+1) + ADP + H(+). It functions in the pathway glycan biosynthesis; glycogen biosynthesis. Synthesizes alpha-1,4-glucan chains using ADP-glucose. The sequence is that of Glycogen synthase from Pseudomonas syringae pv. tomato (strain ATCC BAA-871 / DC3000).